A 274-amino-acid chain; its full sequence is tRNA pseudouridine synthase A (274 aa).

D52 serves as the catalytic Nucleophile. Y110 serves as a coordination point for substrate.

The protein belongs to the tRNA pseudouridine synthase TruA family. In terms of assembly, homodimer.

It carries out the reaction uridine(38/39/40) in tRNA = pseudouridine(38/39/40) in tRNA. Functionally, formation of pseudouridine at positions 38, 39 and 40 in the anticodon stem and loop of transfer RNAs. This chain is tRNA pseudouridine synthase A, found in Ralstonia nicotianae (strain ATCC BAA-1114 / GMI1000) (Ralstonia solanacearum).